The chain runs to 144 residues: Large ribosomal subunit protein uL15 (144 aa).

Positions 1–44 (MNLNELQPAAGSRKLRNRVGRGTSSGNGKTSGRGQKGQKARGKV) are disordered. Residues 23–35 (TSSGNGKTSGRGQ) show a composition bias toward gly residues.

The protein belongs to the universal ribosomal protein uL15 family. In terms of assembly, part of the 50S ribosomal subunit.

Binds to the 23S rRNA. The chain is Large ribosomal subunit protein uL15 from Leuconostoc citreum (strain KM20).